The following is a 160-amino-acid chain: UPF0225 protein PP_1119 (160 aa).

This sequence belongs to the UPF0225 family.

The sequence is that of UPF0225 protein PP_1119 from Pseudomonas putida (strain ATCC 47054 / DSM 6125 / CFBP 8728 / NCIMB 11950 / KT2440).